The sequence spans 331 residues: Anthranilate phosphoribosyltransferase (331 aa).

5-phospho-alpha-D-ribose 1-diphosphate contacts are provided by residues Gly79, 82–83 (GD), Ser87, 89–92 (NIST), 107–115 (KHCNTSISS), and Ser119. An anthranilate-binding site is contributed by Gly79. Ser91 contributes to the Mg(2+) binding site. Asn110 contacts anthranilate. Arg165 is a binding site for anthranilate. 2 residues coordinate Mg(2+): Asp223 and Glu224.

Belongs to the anthranilate phosphoribosyltransferase family. Homodimer. Mg(2+) serves as cofactor.

The catalysed reaction is N-(5-phospho-beta-D-ribosyl)anthranilate + diphosphate = 5-phospho-alpha-D-ribose 1-diphosphate + anthranilate. It participates in amino-acid biosynthesis; L-tryptophan biosynthesis; L-tryptophan from chorismate: step 2/5. Its function is as follows. Catalyzes the transfer of the phosphoribosyl group of 5-phosphorylribose-1-pyrophosphate (PRPP) to anthranilate to yield N-(5'-phosphoribosyl)-anthranilate (PRA). This chain is Anthranilate phosphoribosyltransferase, found in Buchnera aphidicola subsp. Schlechtendalia chinensis.